A 138-amino-acid polypeptide reads, in one-letter code: uncharacterized protein (138 aa).

Residues 17 to 38 (LCRNDVAHEAGTNNVQIMRIEK) constitute a DNA-binding region (H-T-H motif).

This is an uncharacterized protein from Herpetosiphon aurantiacus (Herpetosiphon giganteus).